The chain runs to 334 residues: Ornithine carbamoyltransferase, catabolic (334 aa).

Carbamoyl phosphate contacts are provided by residues 57-60, Gln84, Arg108, and 135-138; these read STRT and HPTQ. L-ornithine contacts are provided by residues Asn168, Asp232, and 236–237; that span reads SM. Carbamoyl phosphate-binding positions include 274–275 and Arg321; that span reads CL.

This sequence belongs to the aspartate/ornithine carbamoyltransferase superfamily. OTCase family.

The protein localises to the cytoplasm. The enzyme catalyses carbamoyl phosphate + L-ornithine = L-citrulline + phosphate + H(+). It participates in amino-acid degradation; L-arginine degradation via ADI pathway; carbamoyl phosphate from L-arginine: step 2/2. In terms of biological role, reversibly catalyzes the transfer of the carbamoyl group from carbamoyl phosphate (CP) to the N(epsilon) atom of ornithine (ORN) to produce L-citrulline. The sequence is that of Ornithine carbamoyltransferase, catabolic (arcB) from Haemophilus influenzae (strain ATCC 51907 / DSM 11121 / KW20 / Rd).